Consider the following 215-residue polypeptide: Orotate phosphoribosyltransferase (215 aa).

A 5-phospho-alpha-D-ribose 1-diphosphate-binding site is contributed by Lys25. Position 33–34 (33–34 (FF)) interacts with orotate. 5-phospho-alpha-D-ribose 1-diphosphate-binding positions include 71–72 (YK), Arg98, Lys99, Lys102, His104, and 124–132 (DDVITAGTA). Positions 128 and 156 each coordinate orotate.

Belongs to the purine/pyrimidine phosphoribosyltransferase family. PyrE subfamily. In terms of assembly, homodimer.

The catalysed reaction is orotidine 5'-phosphate + diphosphate = orotate + 5-phospho-alpha-D-ribose 1-diphosphate. The protein operates within pyrimidine metabolism; UMP biosynthesis via de novo pathway; UMP from orotate: step 1/2. In terms of biological role, catalyzes the transfer of a ribosyl phosphate group from 5-phosphoribose 1-diphosphate to orotate, leading to the formation of orotidine monophosphate (OMP). This Schizosaccharomyces pombe (strain 972 / ATCC 24843) (Fission yeast) protein is Orotate phosphoribosyltransferase (ura5).